Consider the following 194-residue polypeptide: Metalloproteinase inhibitor 2 (194 aa).

Cys-1 provides a ligand contact to Zn(2+). 2 involved in metalloproteinase-binding regions span residues Cys-1–Ser-4 and Ser-69–Ala-70. Disulfide bonds link Cys-1–Cys-72, Cys-3–Cys-101, Cys-13–Cys-126, Cys-128–Cys-175, Cys-133–Cys-138, and Cys-146–Cys-167. Positions Cys-1–Cys-126 constitute an NTR domain.

It belongs to the protease inhibitor I35 (TIMP) family. Interacts (via the C-terminal) with MMP2 (via the C-terminal PEX domain); the interaction inhibits the MMP2 activity. Post-translationally, the activity of TIMP2 is dependent on the presence of disulfide bonds.

The protein localises to the secreted. Functionally, complexes with metalloproteinases (such as collagenases) and irreversibly inactivates them by binding to their catalytic zinc cofactor. This Oryctolagus cuniculus (Rabbit) protein is Metalloproteinase inhibitor 2 (TIMP2).